A 260-amino-acid chain; its full sequence is Methyl-coenzyme M reductase subunit gamma (260 aa).

Residue arginine 123 coordinates coenzyme M.

The protein belongs to the methyl-coenzyme M reductase gamma subunit family. As to quaternary structure, MCR is a hexamer of two alpha, two beta, and two gamma chains, forming a dimer of heterotrimers. It depends on coenzyme F430 as a cofactor.

The protein resides in the cytoplasm. It catalyses the reaction coenzyme B + methyl-coenzyme M = methane + coenzyme M-coenzyme B heterodisulfide. Its pathway is one-carbon metabolism; methyl-coenzyme M reduction; methane from methyl-coenzyme M: step 1/1. Its function is as follows. Component of the methyl-coenzyme M reductase (MCR) I that catalyzes the reductive cleavage of methyl-coenzyme M (CoM-S-CH3 or 2-(methylthio)ethanesulfonate) using coenzyme B (CoB or 7-mercaptoheptanoylthreonine phosphate) as reductant which results in the production of methane and the mixed heterodisulfide of CoB and CoM (CoM-S-S-CoB). This is the final step in methanogenesis. The sequence is that of Methyl-coenzyme M reductase subunit gamma (mcrG) from Methanococcus vannielii.